The following is a 486-amino-acid chain: MVATPSISSQTKGVVRQVIGPVLDVEFPAGKLPKILNALRIEAKNPAGQDIALTAEVQQLLGDHRVRAVAMSGTDGLVRGMEAIDTGAPISVPVGEATLGRIFNVLGEPVDEQGPVNTKDTAPIHRAAPKLTDLETKPKVFETGIKVIDLLAPYRQGGKVGLFGGAGVGKTVLIQELINNIAKEHGGVSVFGGVGERTREGNDLYEEFKESGVINADDLTQSKVALCFGQMNEPPGARMRVGLSALTMAEHFRDVNKQDVLLFVDNIFRFVQAGSEVSALLGRMPSAVGYQPTLGTDVGELQERITSTLEGSITSIQAVYVPADDLTDPAPATTFAHLDATTVLARALAAKGIYPAVDPLDSTSTMLQPSVVGDEHYKTARAVQSTLQRYKELQDIIAILGLDELSEEDRLTVDRARKIEKFLSQPFFVAEIFTGMSGKYVKLEDTIAGFNMILSGELDDLPEQAFYLVGNIDEVKAKAEKIKSEK.

164–171 is an ATP binding site; that stretch reads GGAGVGKT.

The protein belongs to the ATPase alpha/beta chains family. F-type ATPases have 2 components, CF(1) - the catalytic core - and CF(0) - the membrane proton channel. CF(1) has five subunits: alpha(3), beta(3), gamma(1), delta(1), epsilon(1). CF(0) has four main subunits: a(1), b(1), b'(1) and c(9-12).

Its subcellular location is the cellular thylakoid membrane. The enzyme catalyses ATP + H2O + 4 H(+)(in) = ADP + phosphate + 5 H(+)(out). Its function is as follows. Produces ATP from ADP in the presence of a proton gradient across the membrane. The catalytic sites are hosted primarily by the beta subunits. In Prochlorococcus marinus (strain AS9601), this protein is ATP synthase subunit beta.